The primary structure comprises 101 residues: Protein Tat (101 aa).

The disordered stretch occupies residues 1–20 (MEPVDPSLEPWKHPGSQPKT). Residues 1-24 (MEPVDPSLEPWKHPGSQPKTACTN) are interaction with human CREBBP. Residues 1-48 (MEPVDPSLEPWKHPGSQPKTACTNCYCKKCCLHCQVCFTTKGLGISYG) form a transactivation region. Zn(2+) is bound by residues C22, C25, and C27. The interval 22-37 (CTNCYCKKCCLHCQVC) is cysteine-rich. N6-acetyllysine; by host PCAF is present on K28. The Zn(2+) site is built by C30, H33, C34, and C37. Residues 38 to 48 (FTTKGLGISYG) form a core region. The disordered stretch occupies residues 45-101 (ISYGRKKRRQRRRPPQDSQTHQVSLPKQPSSQQRGDPTGPKESKKKVERETETDPDN). The segment covering 48 to 57 (GRKKRRQRRR) has biased composition (basic residues). The Nuclear localization signal, RNA-binding (TAR), and protein transduction motif lies at 49–57 (RKKRRQRRR). Residues 49–86 (RKKRRQRRRPPQDSQTHQVSLPKQPSSQQRGDPTGPKE) form an interaction with the host capping enzyme RNGTT region. N6-acetyllysine; by host EP300 and GCN5L2 occurs at positions 50 and 51. R52 and R53 each carry asymmetric dimethylarginine; by host PRMT6. Residues 61–79 (DSQTHQVSLPKQPSSQQRG) are compositionally biased toward polar residues. A Glycyl lysine isopeptide (Lys-Gly) (interchain with G-Cter in ubiquitin) cross-link involves residue K71. The Cell attachment site motif lies at 78-80 (RGD). Residues 83-101 (GPKESKKKVERETETDPDN) show a composition bias toward basic and acidic residues.

Belongs to the lentiviruses Tat family. In terms of assembly, interacts with host CCNT1. Associates with the P-TEFb complex composed at least of Tat, P-TEFb (CDK9 and CCNT1), TAR RNA, RNA Pol II. Recruits the HATs CREBBP, TAF1/TFIID, EP300, PCAF and GCN5L2. Interacts with host KAT5/Tip60; this interaction targets the latter to degradation. Interacts with the host deacetylase SIRT1. Interacts with host capping enzyme RNGTT; this interaction stimulates RNGTT. Binds to host KDR, and to the host integrins ITGAV/ITGB3 and ITGA5/ITGB1. Interacts with host KPNB1/importin beta-1 without previous binding to KPNA1/importin alpha-1. Interacts with EIF2AK2. Interacts with host nucleosome assembly protein NAP1L1; this interaction may be required for the transport of Tat within the nucleus, since the two proteins interact at the nuclear rim. Interacts with host C1QBP/SF2P32; this interaction involves lysine-acetylated Tat. Interacts with the host chemokine receptors CCR2, CCR3 and CXCR4. Interacts with host DPP4/CD26; this interaction may trigger an anti-proliferative effect. Interacts with host LDLR. Interacts with the host extracellular matrix metalloproteinase MMP1. Interacts with host PRMT6; this interaction mediates Tat's methylation. Interacts with, and is ubiquitinated by MDM2/Hdm2. Interacts with host PSMC3 and HTATIP2. Interacts with STAB1; this interaction may overcome SATB1-mediated repression of IL2 and IL2RA (interleukin) in T cells by binding to the same domain than HDAC1. Interacts (when acetylated) with human CDK13, thereby increasing HIV-1 mRNA splicing and promoting the production of the doubly spliced HIV-1 protein Nef. Interacts with host TBP; this interaction modulates the activity of transcriptional pre-initiation complex. Interacts with host RELA. Interacts with host PLSCR1; this interaction negatively regulates Tat transactivation activity by altering its subcellular distribution. Post-translationally, asymmetrical arginine methylation by host PRMT6 seems to diminish the transactivation capacity of Tat and affects the interaction with host CCNT1. Acetylation by EP300, CREBBP, GCN5L2/GCN5 and PCAF regulates the transactivation activity of Tat. EP300-mediated acetylation of Lys-50 promotes dissociation of Tat from the TAR RNA through the competitive binding to PCAF's bromodomain. In addition, the non-acetylated Tat's N-terminus can also interact with PCAF. PCAF-mediated acetylation of Lys-28 enhances Tat's binding to CCNT1. Lys-50 is deacetylated by SIRT1. In terms of processing, polyubiquitination by host MDM2 does not target Tat to degradation, but activates its transactivation function and fosters interaction with CCNT1 and TAR RNA. Post-translationally, phosphorylated by EIF2AK2 on serine and threonine residues adjacent to the basic region important for TAR RNA binding and function. Phosphorylation of Tat by EIF2AK2 is dependent on the prior activation of EIF2AK2 by dsRNA.

The protein resides in the host nucleus. It is found in the host nucleolus. It localises to the host cytoplasm. Its subcellular location is the secreted. Functionally, transcriptional activator that increases RNA Pol II processivity, thereby increasing the level of full-length viral transcripts. Recognizes a hairpin structure at the 5'-LTR of the nascent viral mRNAs referred to as the transactivation responsive RNA element (TAR) and recruits the cyclin T1-CDK9 complex (P-TEFb complex) that will in turn hyperphosphorylate the RNA polymerase II to allow efficient elongation. The CDK9 component of P-TEFb and other Tat-activated kinases hyperphosphorylate the C-terminus of RNA Pol II that becomes stabilized and much more processive. Other factors such as HTATSF1/Tat-SF1, SUPT5H/SPT5, and HTATIP2 are also important for Tat's function. Besides its effect on RNA Pol II processivity, Tat induces chromatin remodeling of proviral genes by recruiting the histone acetyltransferases (HATs) CREBBP, EP300 and PCAF to the chromatin. This also contributes to the increase in proviral transcription rate, especially when the provirus integrates in transcriptionally silent region of the host genome. To ensure maximal activation of the LTR, Tat mediates nuclear translocation of NF-kappa-B by interacting with host RELA. Through its interaction with host TBP, Tat may also modulate transcription initiation. Tat can reactivate a latently infected cell by penetrating in it and transactivating its LTR promoter. In the cytoplasm, Tat is thought to act as a translational activator of HIV-1 mRNAs. In terms of biological role, extracellular circulating Tat can be endocytosed by surrounding uninfected cells via the binding to several surface receptors such as CD26, CXCR4, heparan sulfate proteoglycans (HSPG) or LDLR. Neurons are rarely infected, but they internalize Tat via their LDLR. Through its interaction with nuclear HATs, Tat is potentially able to control the acetylation-dependent cellular gene expression. Modulates the expression of many cellular genes involved in cell survival, proliferation or in coding for cytokines or cytokine receptors. Tat plays a role in T-cell and neurons apoptosis. Tat induced neurotoxicity and apoptosis probably contribute to neuroAIDS. Circulating Tat also acts as a chemokine-like and/or growth factor-like molecule that binds to specific receptors on the surface of the cells, affecting many cellular pathways. In the vascular system, Tat binds to ITGAV/ITGB3 and ITGA5/ITGB1 integrins dimers at the surface of endothelial cells and competes with bFGF for heparin-binding sites, leading to an excess of soluble bFGF. The sequence is that of Protein Tat from Homo sapiens (Human).